A 332-amino-acid chain; its full sequence is Protoheme IX farnesyltransferase (332 aa).

A run of 7 helical transmembrane segments spans residues leucine 63–leucine 83, threonine 109–valine 129, leucine 132–leucine 152, isoleucine 160–glycine 180, tryptophan 188–leucine 208, isoleucine 245–phenylalanine 265, and alanine 286–isoleucine 306.

The protein belongs to the UbiA prenyltransferase family. Protoheme IX farnesyltransferase subfamily.

The protein localises to the cell inner membrane. It catalyses the reaction heme b + (2E,6E)-farnesyl diphosphate + H2O = Fe(II)-heme o + diphosphate. It participates in porphyrin-containing compound metabolism; heme O biosynthesis; heme O from protoheme: step 1/1. Its function is as follows. Converts heme B (protoheme IX) to heme O by substitution of the vinyl group on carbon 2 of heme B porphyrin ring with a hydroxyethyl farnesyl side group. The chain is Protoheme IX farnesyltransferase from Prochlorococcus marinus subsp. pastoris (strain CCMP1986 / NIES-2087 / MED4).